Consider the following 206-residue polypeptide: Outer-membrane lipoprotein carrier protein (206 aa).

The first 21 residues, 1–21 (MKKLLCAVLLSPLLYSNAVLA), serve as a signal peptide directing secretion.

This sequence belongs to the LolA family. In terms of assembly, monomer.

It localises to the periplasm. Participates in the translocation of lipoproteins from the inner membrane to the outer membrane. Only forms a complex with a lipoprotein if the residue after the N-terminal Cys is not an aspartate (The Asp acts as a targeting signal to indicate that the lipoprotein should stay in the inner membrane). This Shewanella sp. (strain MR-7) protein is Outer-membrane lipoprotein carrier protein.